The chain runs to 178 residues: CDP-archaeol synthase (178 aa).

The next 4 membrane-spanning stretches (helical) occupy residues 3-23 (LLLL…ANAV), 56-76 (FFGI…VILY), 91-111 (IILS…GSFI), and 136-156 (LLFA…LLVI).

This sequence belongs to the CDP-archaeol synthase family. Mg(2+) is required as a cofactor.

Its subcellular location is the cell membrane. The catalysed reaction is 2,3-bis-O-(geranylgeranyl)-sn-glycerol 1-phosphate + CTP + H(+) = CDP-2,3-bis-O-(geranylgeranyl)-sn-glycerol + diphosphate. The protein operates within membrane lipid metabolism; glycerophospholipid metabolism. Its function is as follows. Catalyzes the formation of CDP-2,3-bis-(O-geranylgeranyl)-sn-glycerol (CDP-archaeol) from 2,3-bis-(O-geranylgeranyl)-sn-glycerol 1-phosphate (DGGGP) and CTP. This reaction is the third ether-bond-formation step in the biosynthesis of archaeal membrane lipids. This Methanococcus maripaludis (strain C5 / ATCC BAA-1333) protein is CDP-archaeol synthase.